The following is a 485-amino-acid chain: Glutamyl-tRNA(Gln) amidotransferase subunit A (485 aa).

Residues K79 and S154 each act as charge relay system in the active site. S178 serves as the catalytic Acyl-ester intermediate.

This sequence belongs to the amidase family. GatA subfamily. In terms of assembly, heterotrimer of A, B and C subunits.

It catalyses the reaction L-glutamyl-tRNA(Gln) + L-glutamine + ATP + H2O = L-glutaminyl-tRNA(Gln) + L-glutamate + ADP + phosphate + H(+). In terms of biological role, allows the formation of correctly charged Gln-tRNA(Gln) through the transamidation of misacylated Glu-tRNA(Gln) in organisms which lack glutaminyl-tRNA synthetase. The reaction takes place in the presence of glutamine and ATP through an activated gamma-phospho-Glu-tRNA(Gln). This is Glutamyl-tRNA(Gln) amidotransferase subunit A from Staphylococcus epidermidis (strain ATCC 12228 / FDA PCI 1200).